Consider the following 778-residue polypeptide: Endonuclease MutS2 (778 aa).

Residue 328–335 (GPNTGGKT) participates in ATP binding. The Smr domain occupies 703–778 (LDLRGKRYEE…GSGCTIANLG (76 aa)).

The protein belongs to the DNA mismatch repair MutS family. MutS2 subfamily. In terms of assembly, homodimer. Binds to stalled ribosomes, contacting rRNA.

Its function is as follows. Endonuclease that is involved in the suppression of homologous recombination and thus may have a key role in the control of bacterial genetic diversity. Functionally, acts as a ribosome collision sensor, splitting the ribosome into its 2 subunits. Detects stalled/collided 70S ribosomes which it binds and splits by an ATP-hydrolysis driven conformational change. Acts upstream of the ribosome quality control system (RQC), a ribosome-associated complex that mediates the extraction of incompletely synthesized nascent chains from stalled ribosomes and their subsequent degradation. Probably generates substrates for RQC. This chain is Endonuclease MutS2, found in Streptococcus equi subsp. zooepidemicus (strain H70).